The primary structure comprises 567 residues: MRKQLGEAVGEVKTDIEIARAARKQPIMEVGARLGIPPEHLLPYGHDKAKVSAEFIAAQREKKNGRLILVTAINPTPAGEGKTTTTVGLVDGLNRIGKKAIVCIREASLGPCFGIKGGAAGGGYAQVVPMEDINLHFTGDFHAITSAHNLLSALIDNHIYWGNEQAIDIRRIAWRRVMDMNDRALRHIVGSLGGVANGYPRETGFDITVASEVMAILCLAMDIRDLERRLGNIIIGYRRDKSPVYARDIKADGAMAVLLKDAMQPNLVQTLENNPAFVHGGPFANIAHGCNSVVATTTALKLADYVVTEAGFGADLGAEKFFDIKCRKAGLMPDAAVIVATVRAIKMNGGVKKEDLAKENVEALRKGCPNLGRHIQNVKKFGVPVLVAINHFTSDTEAEIQAIKDYVRTLGSEAVLCKHWAEGSAGIEELADKVADLADAGHSQFSPLYPDEMPLFQKIEAIAKDIYHASEVIADKLVRDQLRIWEDQGYGHLPICMAKTQYSFSTDPNLRGAPTGHTVPIREVRLAAGAGFIVVITGEIMTMPGLPKVPSSERIRLDEEGYIEGLF.

76–83 provides a ligand contact to ATP; sequence TPAGEGKT.

It belongs to the formate--tetrahydrofolate ligase family.

The enzyme catalyses (6S)-5,6,7,8-tetrahydrofolate + formate + ATP = (6R)-10-formyltetrahydrofolate + ADP + phosphate. It functions in the pathway one-carbon metabolism; tetrahydrofolate interconversion. The protein is Formate--tetrahydrofolate ligase of Sinorhizobium medicae (strain WSM419) (Ensifer medicae).